We begin with the raw amino-acid sequence, 1219 residues long: Disease resistance-like protein DSC1 (1219 aa).

The 168-residue stretch at 9–176 (AEFDVFLSFR…EIAVDTFKKL (168 aa)) folds into the TIR domain. The active site involves Glu83. The NB-ARC domain occupies 197-446 (LEKLLSWEDL…DIACFFRSEN (250 aa)). Residue 216 to 222 (GMVGIGK) coordinates ATP. 11 LRR repeats span residues 468 to 493 (LVDK…MAKE), 538 to 563 (TDKI…AFQG), 597 to 619 (PNEL…DFDP), 620 to 642 (KNLV…EKDV), 665 to 689 (AHNL…INCL), 690 to 713 (EKLI…IKTQ), 733 to 757 (SENV…QTFR), 759 to 780 (LALL…LYKL), 804 to 827 (MESL…MHLS), 854 to 877 (CSRL…IGGL), and 878 to 899 (SSLQ…SFNQ).

The protein belongs to the disease resistance NB-LRR family. As to quaternary structure, interacts with CAMTA3 and DSC2.

The catalysed reaction is NAD(+) + H2O = ADP-D-ribose + nicotinamide + H(+). TIR-NB-LRR receptor-like protein involved in plant defense. Acts as a trigger of hypersensitive response (HR). Functions as a guard of CAMTA3, a negative regulator of immunity, during pathogen infection. The polypeptide is Disease resistance-like protein DSC1 (Arabidopsis thaliana (Mouse-ear cress)).